The following is a 294-amino-acid chain: Nucleotide-binding protein LCA_0526 (294 aa).

12–19 lines the ATP pocket; sequence GMSGAGKT. 62-65 is a GTP binding site; it reads DLRS.

Belongs to the RapZ-like family.

Functionally, displays ATPase and GTPase activities. This is Nucleotide-binding protein LCA_0526 from Latilactobacillus sakei subsp. sakei (strain 23K) (Lactobacillus sakei subsp. sakei).